Reading from the N-terminus, the 424-residue chain is Serine--tRNA ligase (424 aa).

229–231 contacts L-serine; sequence TAE. ATP is bound at residue 260-262; the sequence is RRE. Glutamate 283 contributes to the L-serine binding site. Position 347–350 (347–350) interacts with ATP; the sequence is EVSS. Serine 383 is a binding site for L-serine.

Belongs to the class-II aminoacyl-tRNA synthetase family. Type-1 seryl-tRNA synthetase subfamily. In terms of assembly, homodimer. The tRNA molecule binds across the dimer.

It is found in the cytoplasm. The catalysed reaction is tRNA(Ser) + L-serine + ATP = L-seryl-tRNA(Ser) + AMP + diphosphate + H(+). It catalyses the reaction tRNA(Sec) + L-serine + ATP = L-seryl-tRNA(Sec) + AMP + diphosphate + H(+). The protein operates within aminoacyl-tRNA biosynthesis; selenocysteinyl-tRNA(Sec) biosynthesis; L-seryl-tRNA(Sec) from L-serine and tRNA(Sec): step 1/1. Functionally, catalyzes the attachment of serine to tRNA(Ser). Is also able to aminoacylate tRNA(Sec) with serine, to form the misacylated tRNA L-seryl-tRNA(Sec), which will be further converted into selenocysteinyl-tRNA(Sec). This is Serine--tRNA ligase from Roseiflexus sp. (strain RS-1).